Consider the following 306-residue polypeptide: Porphobilinogen deaminase (306 aa).

Cysteine 234 carries the S-(dipyrrolylmethanemethyl)cysteine modification.

Belongs to the HMBS family. In terms of assembly, monomer. The cofactor is dipyrromethane.

The enzyme catalyses 4 porphobilinogen + H2O = hydroxymethylbilane + 4 NH4(+). The protein operates within porphyrin-containing compound metabolism; protoporphyrin-IX biosynthesis; coproporphyrinogen-III from 5-aminolevulinate: step 2/4. Functionally, tetrapolymerization of the monopyrrole PBG into the hydroxymethylbilane pre-uroporphyrinogen in several discrete steps. This is Porphobilinogen deaminase from Mycobacteroides abscessus (strain ATCC 19977 / DSM 44196 / CCUG 20993 / CIP 104536 / JCM 13569 / NCTC 13031 / TMC 1543 / L948) (Mycobacterium abscessus).